Consider the following 370-residue polypeptide: MKFNELYIGVMSGTSMDGVDTALVEITDNHVRLIAHGDYPMPAAMKEMLLSVCTGQATNLKAIGELDHQLGHLFADAVLQLLNKSGYVAEQIRAIGNHGQTVFHQPTGDLPFTTQLGDANIIAVKTGIDTVADFRRKDMALGGQGAPLVPAFHKSIFAMQDSTTVVLNIGGIANISVLHPQQPVHGYDTGPGNMLMDAWCERHTGHGFDKDAQLALRGSVNEALLAHLLKEPYLAMSAPKSTGRELFNMDWLHHQLANYDVSVEDVQRTLCEYTAITIAHDVTKFTYGETPQLLVCGGGARNPLLMQRLAELLPQWHVTTTTDKGVDGDYMEAMAFAWLAQRHIHDLPSNLPEVTGASRLASLGVLYSKN.

An ATP-binding site is contributed by 13-20 (GTSMDGVD).

This sequence belongs to the anhydro-N-acetylmuramic acid kinase family.

The catalysed reaction is 1,6-anhydro-N-acetyl-beta-muramate + ATP + H2O = N-acetyl-D-muramate 6-phosphate + ADP + H(+). The protein operates within amino-sugar metabolism; 1,6-anhydro-N-acetylmuramate degradation. It participates in cell wall biogenesis; peptidoglycan recycling. Catalyzes the specific phosphorylation of 1,6-anhydro-N-acetylmuramic acid (anhMurNAc) with the simultaneous cleavage of the 1,6-anhydro ring, generating MurNAc-6-P. Is required for the utilization of anhMurNAc either imported from the medium or derived from its own cell wall murein, and thus plays a role in cell wall recycling. The sequence is that of Anhydro-N-acetylmuramic acid kinase from Vibrio parahaemolyticus serotype O3:K6 (strain RIMD 2210633).